The chain runs to 170 residues: ATP synthase subunit b (170 aa).

A helical membrane pass occupies residues 15–37 (FNLFETNILNWAVVIFGLYKFLP). A disordered region spans residues 72 to 98 (AKKDLSSAEEKASQIKADSLKRSESIR).

The protein belongs to the ATPase B chain family. In terms of assembly, F-type ATPases have 2 components, F(1) - the catalytic core - and F(0) - the membrane proton channel. F(1) has five subunits: alpha(3), beta(3), gamma(1), delta(1), epsilon(1). F(0) has four main subunits: a(1), b(1), b'(1) and c(10-14). The alpha and beta chains form an alternating ring which encloses part of the gamma chain. F(1) is attached to F(0) by a central stalk formed by the gamma and epsilon chains, while a peripheral stalk is formed by the delta, b and b' chains.

The protein localises to the cellular thylakoid membrane. F(1)F(0) ATP synthase produces ATP from ADP in the presence of a proton or sodium gradient. F-type ATPases consist of two structural domains, F(1) containing the extramembraneous catalytic core and F(0) containing the membrane proton channel, linked together by a central stalk and a peripheral stalk. During catalysis, ATP synthesis in the catalytic domain of F(1) is coupled via a rotary mechanism of the central stalk subunits to proton translocation. In terms of biological role, component of the F(0) channel, it forms part of the peripheral stalk, linking F(1) to F(0). The chain is ATP synthase subunit b from Prochlorococcus marinus (strain MIT 9215).